We begin with the raw amino-acid sequence, 576 residues long: Acetylcholine receptor subunit alpha-like 2 (576 aa).

Residues 1–21 (MAPGCCTTRPRPIALLAHIWR) form the signal peptide. Residues 22 to 261 (HCKPLCLLLV…FFNITLRRKT (240 aa)) lie on the Extracellular side of the membrane. N65 is a glycosylation site (N-linked (GlcNAc...) asparagine). Disulfide bonds link C169–C183 and C243–C244. The N-linked (GlcNAc...) asparagine glycan is linked to N254. A run of 3 helical transmembrane segments spans residues 262–285 (LFYT…VFYL), 293–311 (IALC…LLIS), and 327–346 (YLLF…IIIL). The Cytoplasmic portion of the chain corresponds to 347 to 526 (NIHYRKPSTH…WGFVAMVMDR (180 aa)). A helical transmembrane segment spans residues 527 to 545 (LFLWLFMIASLVGTFVILG). The N-linked (GlcNAc...) asparagine glycan is linked to N570.

Belongs to the ligand-gated ion channel (TC 1.A.9) family. Acetylcholine receptor (TC 1.A.9.1) subfamily. CNS in embryos.

The protein resides in the postsynaptic cell membrane. Its subcellular location is the cell membrane. In terms of biological role, after binding acetylcholine, the AChR responds by an extensive change in conformation that affects all subunits and leads to opening of an ion-conducting channel across the plasma membrane. This chain is Acetylcholine receptor subunit alpha-like 2 (nAChRalpha2), found in Drosophila melanogaster (Fruit fly).